The primary structure comprises 80 residues: Conotoxin ArMKLT2-0321 (80 aa).

A signal peptide spans 1–21 (MKLTCVLIIAMLFLIVCQLNT). Positions 22–48 (ADDSTDKQEYRAVKLRDAMRNFKGSKR) are excised as a propeptide. Intrachain disulfides connect C50–C63, C57–C68, and C62–C77.

Belongs to the conotoxin O1 superfamily. As to expression, expressed by the venom duct.

The protein localises to the secreted. The polypeptide is Conotoxin ArMKLT2-0321 (Conus arenatus (Sand-dusted cone)).